A 257-amino-acid chain; its full sequence is tRNA (cytidine/uridine/adenosine-2'-O-)-methyltransferase TrmJ (257 aa).

Residues 79-82 (TSAR), 115-117 (GRE), Ile135, and 142-144 (GSL) each bind S-adenosyl-L-methionine.

It belongs to the class IV-like SAM-binding methyltransferase superfamily. RNA methyltransferase TrmH family. In terms of assembly, homodimer.

The protein resides in the cytoplasm. It carries out the reaction cytidine(32) in tRNA + S-adenosyl-L-methionine = 2'-O-methylcytidine(32) in tRNA + S-adenosyl-L-homocysteine + H(+). The enzyme catalyses uridine(32) in tRNA + S-adenosyl-L-methionine = 2'-O-methyluridine(32) in tRNA + S-adenosyl-L-homocysteine + H(+). The catalysed reaction is adenosine(32) in tRNA + S-adenosyl-L-methionine = 2'-O-methyladenosine(32) in tRNA + S-adenosyl-L-homocysteine + H(+). Functionally, catalyzes the formation of 2'O-methylated cytidine (Cm32), 2'O-methylated uridine (Um32) or 2'O-methylated adenosine (Am32) at position 32 in tRNA. Confers resistance to oxidative stress. The protein is tRNA (cytidine/uridine/adenosine-2'-O-)-methyltransferase TrmJ of Pseudomonas aeruginosa (strain UCBPP-PA14).